Here is a 91-residue protein sequence, read N- to C-terminus: Large ribosomal subunit protein uL23c (91 aa).

This sequence belongs to the universal ribosomal protein uL23 family. In terms of assembly, part of the 50S ribosomal subunit.

The protein resides in the plastid. The protein localises to the chloroplast. Functionally, binds to 23S rRNA. In Pinus koraiensis (Korean pine), this protein is Large ribosomal subunit protein uL23c (rpl23).